A 210-amino-acid polypeptide reads, in one-letter code: Pyridoxine/pyridoxamine 5'-phosphate oxidase (210 aa).

Residues 7-10 (REDY) and lysine 65 contribute to the substrate site. Residues 60–65 (RVVLLK), 75–76 (FT), arginine 81, lysine 82, and glutamine 104 contribute to the FMN site. Substrate is bound by residues tyrosine 122, arginine 126, and serine 130. FMN-binding positions include 139–140 (QS) and tryptophan 183. Position 189-191 (189-191 (RLH)) interacts with substrate. Arginine 193 is an FMN binding site.

The protein belongs to the pyridoxamine 5'-phosphate oxidase family. As to quaternary structure, homodimer. FMN is required as a cofactor.

It catalyses the reaction pyridoxamine 5'-phosphate + O2 + H2O = pyridoxal 5'-phosphate + H2O2 + NH4(+). The enzyme catalyses pyridoxine 5'-phosphate + O2 = pyridoxal 5'-phosphate + H2O2. The protein operates within cofactor metabolism; pyridoxal 5'-phosphate salvage; pyridoxal 5'-phosphate from pyridoxamine 5'-phosphate: step 1/1. It participates in cofactor metabolism; pyridoxal 5'-phosphate salvage; pyridoxal 5'-phosphate from pyridoxine 5'-phosphate: step 1/1. In terms of biological role, catalyzes the oxidation of either pyridoxine 5'-phosphate (PNP) or pyridoxamine 5'-phosphate (PMP) into pyridoxal 5'-phosphate (PLP). The chain is Pyridoxine/pyridoxamine 5'-phosphate oxidase from Actinobacillus succinogenes (strain ATCC 55618 / DSM 22257 / CCUG 43843 / 130Z).